We begin with the raw amino-acid sequence, 748 residues long: Cytosolic phospholipase A2 (748 aa).

The segment at 1–178 is phospholipid binding; it reads MSFIDPYQHI…MRKLLGPKKS (178 aa). S2 is subject to Phosphoserine. Positions 6-122 constitute a C2 domain; the sequence is PYQHIIVEHQ…KVGEKKEVPF (117 aa). Positions 40, 41, 43, 65, 93, 94, and 95 each coordinate Ca(2+). A PLA2c domain is found at 138–739; sequence VCSSPDLRFS…SNVEARRFFN (602 aa). The Nucleophile role is filled by S228. A Phosphothreonine modification is found at T268. A disordered region spans residues 428–458; that stretch reads HIVSNDSSDSDDESQEPKGTEGEDAEREYQN. Phosphoserine occurs at positions 434, 435, and 437. Over residues 442 to 458 the composition is skewed to basic and acidic residues; that stretch reads QEPKGTEGEDAEREYQN. S505 bears the Phosphoserine; by MAPK mark. A Phosphoserine modification is found at S514. K540 participates in a covalent cross-link: Glycyl lysine isopeptide (Lys-Gly) (interchain with G-Cter in SUMO2). The Proton acceptor role is filled by D548. A Glycyl lysine isopeptide (Lys-Gly) (interchain with G-Cter in SUMO2) cross-link involves residue K605. Phosphoserine occurs at positions 726 and 728.

As to quaternary structure, interacts with KAT5. Post-translationally, phosphorylated at both Ser-505 and Ser-726 in response to mitogenic stimuli.

The protein resides in the cytoplasm. Its subcellular location is the golgi apparatus membrane. The protein localises to the nucleus envelope. The enzyme catalyses a 1,2-diacyl-sn-glycero-3-phosphocholine + H2O = a 1-acyl-sn-glycero-3-phosphocholine + a fatty acid + H(+). It catalyses the reaction a 1-O-alkyl-2-acyl-sn-glycero-3-phosphocholine + H2O = a 1-O-alkyl-sn-glycero-3-phosphocholine + a fatty acid + H(+). It carries out the reaction a 1-acyl-sn-glycero-3-phosphocholine + H2O = sn-glycerol 3-phosphocholine + a fatty acid + H(+). The catalysed reaction is 1-hexadecanoyl-2-(5Z,8Z,11Z,14Z-eicosatetraenoyl)-sn-glycero-3-phosphocholine + H2O = 1-hexadecanoyl-sn-glycero-3-phosphocholine + (5Z,8Z,11Z,14Z)-eicosatetraenoate + H(+). The enzyme catalyses 1,2-di-(5Z,8Z,11Z,14Z-eicosatetraenoyl)-sn-glycero-3-phosphocholine + H2O = 1-(5Z,8Z,11Z,14Z-eicosatetraenoyl)-sn-glycero-3-phosphocholine + (5Z,8Z,11Z,14Z)-eicosatetraenoate + H(+). It catalyses the reaction 1-octadecanoyl-2-(5Z,8Z,11Z,14Z-eicosatetraenoyl)-sn-glycero-3-phosphocholine + H2O = 1-octadecanoyl-sn-glycero-3-phosphocholine + (5Z,8Z,11Z,14Z)-eicosatetraenoate + H(+). It carries out the reaction 1-hexadecanoyl-2-(9Z,12Z-octadecadienoyl)-sn-glycero-3-phosphocholine + H2O = (9Z,12Z)-octadecadienoate + 1-hexadecanoyl-sn-glycero-3-phosphocholine + H(+). The catalysed reaction is 1-octadecanoyl-2-(9Z,12Z,15Z-octadecatrienoyl)-sn-glycero-3-phosphocholine + H2O = (9Z,12Z,15Z)-octadecatrienoate + 1-octadecanoyl-sn-glycero-3-phosphocholine + H(+). The enzyme catalyses 1-(5Z,8Z,11Z,14Z-eicosatetraenoyl)-2-hexadecanoyl-sn-glycero-3-phosphocholine + H2O = 1-(5Z,8Z,11Z,14Z-eicosatetraenoyl)-sn-glycero-3-phosphocholine + hexadecanoate + H(+). It catalyses the reaction 1-O-hexadecyl-2-(5Z,8Z,11Z,14Z)-eicosatetraenoyl-sn-glycero-3-phosphocholine + H2O = 1-O-hexadecyl-sn-glycero-3-phosphocholine + (5Z,8Z,11Z,14Z)-eicosatetraenoate + H(+). It carries out the reaction 1,2-di-(9Z-octadecenoyl)-sn-glycero-3-phospho-(1'-sn-glycerol) + H2O = 1-(9Z-octadecenoyl)-sn-glycero-3-phospho-(1'-sn-glycerol) + (9Z)-octadecenoate + H(+). The catalysed reaction is 1-octadecanoyl-2-(5Z,8Z,11Z,14Z-eicosatetraenoyl)-sn-glycero-3-phosphate + H2O = 1-octadecanoyl-sn-glycero-3-phosphate + (5Z,8Z,11Z,14Z)-eicosatetraenoate + H(+). The enzyme catalyses 1-hexadecanoyl-sn-glycero-3-phosphocholine + H2O = sn-glycerol 3-phosphocholine + hexadecanoate + H(+). It catalyses the reaction 2-(prostaglandin E2)-sn-glycero-3-phosphoethanolamine + H2O = sn-glycero-3-phosphoethanolamine + prostaglandin E2 + H(+). It carries out the reaction 2-[(15S)-hydroxy-(5Z,8Z,11Z,13E)-eicosatetraenoyl]-sn-glycero-3-phosphocholine + H2O = (15S)-hydroxy-(5Z,8Z,11Z,13E)-eicosatetraenoate + sn-glycerol 3-phosphocholine + H(+). The catalysed reaction is 2-[(15R)-hydroxy-(5Z,8Z,11Z,13E)-eicosatetraenoyl]-sn-glycero-3-phosphocholine + H2O = (15R)-hydroxy-(5Z,8Z,11Z,13E)-eicosatetraenoate + sn-glycerol 3-phosphocholine + H(+). The enzyme catalyses 2-(prostaglandin E2)-sn-glycero-3-phosphocholine + H2O = prostaglandin E2 + sn-glycerol 3-phosphocholine + H(+). It catalyses the reaction 2-[(11R)-hydroxy-(5Z,8Z,12E,14Z)-eicosatetraenoyl]-sn-glycero-3-phosphocholine + H2O = (11R)-hydroxy-(5Z,8Z,12E,14Z)-eicosatetraenoate + sn-glycerol 3-phosphocholine + H(+). It carries out the reaction 1-(5Z,8Z,11Z,14Z-eicosatetraenoyl)-2-O-hexadecyl-sn-glycero-3-phosphocholine + H2O = 2-O-hexadecyl-sn-glycero-3-phosphocholine + (5Z,8Z,11Z,14Z)-eicosatetraenoate + H(+). The catalysed reaction is 1-octadecanoyl-2-(5Z,8Z,11Z,14Z-eicosatetraenoyl)-sn-glycero-3-phosphocholine + glycerol = 1-(5Z,8Z,11Z,14Z-eicosatetraenoyl)-glycerol + 1-octadecanoyl-sn-glycero-3-phosphocholine. The enzyme catalyses 1-octadecanoyl-2-(9Z,12Z,15Z-octadecatrienoyl)-sn-glycero-3-phosphocholine + glycerol = 1-(9Z,12Z,15Z-octadecatrienoyl)-glycerol + 1-octadecanoyl-sn-glycero-3-phosphocholine. The protein operates within membrane lipid metabolism; glycerophospholipid metabolism. It participates in lipid metabolism; arachidonate metabolism. It functions in the pathway lipid metabolism; prostaglandin biosynthesis. Its pathway is lipid metabolism; leukotriene B4 biosynthesis. Its activity is regulated as follows. Activated by cytosolic calcium, which is necessary for binding to membrane lipids. Activated by phosphorylation in response to mitogenic stimuli. Has primarily calcium-dependent phospholipase and lysophospholipase activities, with a major role in membrane lipid remodeling and biosynthesis of lipid mediators of the inflammatory response. Plays an important role in embryo implantation and parturition through its ability to trigger prostanoid production. Preferentially hydrolyzes the ester bond of the fatty acyl group attached at sn-2 position of phospholipids (phospholipase A2 activity). Selectively hydrolyzes sn-2 arachidonoyl group from membrane phospholipids, providing the precursor for eicosanoid biosynthesis via the cyclooxygenase pathway. In an alternative pathway of eicosanoid biosynthesis, hydrolyzes sn-2 fatty acyl chain of eicosanoid lysophopholipids to release free bioactive eicosanoids. Hydrolyzes the ester bond of the fatty acyl group attached at sn-1 position of phospholipids (phospholipase A1 activity) only if an ether linkage rather than an ester linkage is present at the sn-2 position. This hydrolysis is not stereospecific. Has calcium-independent phospholipase A2 and lysophospholipase activities in the presence of phosphoinositides. Has O-acyltransferase activity. Catalyzes the transfer of fatty acyl chains from phospholipids to a primary hydroxyl group of glycerol (sn-1 or sn-3), potentially contributing to monoacylglycerol synthesis. This is Cytosolic phospholipase A2 (PLA2G4A) from Oryctolagus cuniculus (Rabbit).